Here is a 122-residue protein sequence, read N- to C-terminus: Aspartate 1-decarboxylase (122 aa).

Ser25 acts as the Schiff-base intermediate with substrate; via pyruvic acid in catalysis. Residue Ser25 is modified to Pyruvic acid (Ser). Residue Thr57 participates in substrate binding. The active-site Proton donor is the Tyr58. Gly73 to Ala75 contacts substrate.

It belongs to the PanD family. Heterooctamer of four alpha and four beta subunits. Pyruvate is required as a cofactor. Is synthesized initially as an inactive proenzyme, which is activated by self-cleavage at a specific serine bond to produce a beta-subunit with a hydroxyl group at its C-terminus and an alpha-subunit with a pyruvoyl group at its N-terminus.

It localises to the cytoplasm. It carries out the reaction L-aspartate + H(+) = beta-alanine + CO2. It functions in the pathway cofactor biosynthesis; (R)-pantothenate biosynthesis; beta-alanine from L-aspartate: step 1/1. Its function is as follows. Catalyzes the pyruvoyl-dependent decarboxylation of aspartate to produce beta-alanine. In Bordetella pertussis (strain Tohama I / ATCC BAA-589 / NCTC 13251), this protein is Aspartate 1-decarboxylase.